Here is a 553-residue protein sequence, read N- to C-terminus: MTDIKMIALGGVREYGKNFYLVEINDSMFILDAGLKYPENEQLGVDLVIPNLDYVIENKGKVQGIFLSHGHADAIGALPYLLAEVSAPVFGSELTIELAKLFVKSNNSTKKFNNFHVVDSDTEIEFKDGLVSFFRTTHSIPESMGIVIGTDKGNIVYTGDFKFDQAAREGYQTDLLRLAEIGKEGVLALLSDSVNATSNDQIASESEVGEEMDSVISDADGRVIVAAVASNLVRIQQVFDSATAHGRRVVLTGTDAENIVRTALRLEKLMITDERLLIKPKDMSKFEDHELIILEAGRMGEPINSLQKMAAGRHRYVQIKEGDLVYIVTTPSTAKEAMVARVENLIYKAGGSVKLITQNLRVSGHANGRDLQLLMNLLKPQYLFPVQGEYRDLAAHAKLAEEVGIFPENIHILKRGDIMVLNDEGFLHEGGVPASDVMIDGNAIGDVGNIVLRDRKVLSEDGIFIVAITVSKKEKRIISKAKVNTRGFVYVKKSHDILRESAELVNTTVGNYLKKDTFDWGELKGNVRDDLSKFLFEQTKRRPAILPVVMEVR.

H69, H71, H138, and D160 together coordinate Zn(2+). 361–365 (RVSGH) lines the substrate pocket.

This sequence belongs to the metallo-beta-lactamase superfamily. RNA-metabolizing metallo-beta-lactamase-like family. Bacterial RNase J subfamily. In terms of assembly, homodimer, may be a subunit of the RNA degradosome. It depends on Zn(2+) as a cofactor.

It is found in the cytoplasm. An RNase that has 5'-3' exonuclease and possibly endonuclease activity. Involved in maturation of rRNA and in some organisms also mRNA maturation and/or decay. Has an overlapping but not completely redundant role with RNase J1 in the decay of mRNA. The polypeptide is Ribonuclease J 2 (Streptococcus pyogenes serotype M3 (strain ATCC BAA-595 / MGAS315)).